A 207-amino-acid polypeptide reads, in one-letter code: Protein 6b (207 aa).

Residues 161–185 form a disordered region; sequence NTLEEGEDDDDEMDDEGEAGGAEPR. Residues 164-178 show a composition bias toward acidic residues; the sequence is EEGEDDDDEMDDEGE.

In terms of biological role, involved in tumor formation and increases auxin and cytokinin effects in host plants. The sequence is that of Protein 6b (6b) from Agrobacterium tumefaciens (strain 15955).